Here is a 265-residue protein sequence, read N- to C-terminus: Hydroxyethylthiazole kinase (265 aa).

Residue Met-50 coordinates substrate. ATP-binding residues include Arg-125 and Thr-171. Gly-198 contributes to the substrate binding site.

This sequence belongs to the Thz kinase family. Mg(2+) serves as cofactor.

The catalysed reaction is 5-(2-hydroxyethyl)-4-methylthiazole + ATP = 4-methyl-5-(2-phosphooxyethyl)-thiazole + ADP + H(+). The protein operates within cofactor biosynthesis; thiamine diphosphate biosynthesis; 4-methyl-5-(2-phosphoethyl)-thiazole from 5-(2-hydroxyethyl)-4-methylthiazole: step 1/1. Functionally, catalyzes the phosphorylation of the hydroxyl group of 4-methyl-5-beta-hydroxyethylthiazole (THZ). The chain is Hydroxyethylthiazole kinase from Salmonella paratyphi C (strain RKS4594).